The sequence spans 245 residues: rRNA adenine N-6-methyltransferase (245 aa).

Residues asparagine 10, leucine 12, glycine 37, glutamate 58, aspartate 83, and asparagine 100 each contribute to the S-adenosyl-L-methionine site.

This sequence belongs to the class I-like SAM-binding methyltransferase superfamily. rRNA adenine N(6)-methyltransferase family.

The catalysed reaction is adenosine(2085) in 23S rRNA + 2 S-adenosyl-L-methionine = N(6)-dimethyladenosine(2085) in 23S rRNA + 2 S-adenosyl-L-homocysteine + 2 H(+). This protein produces a dimethylation of the adenine residue at position 2085 in 23S rRNA, resulting in reduced affinity between ribosomes and macrolide-lincosamide-streptogramin B antibiotics. This chain is rRNA adenine N-6-methyltransferase (ermB), found in Enterococcus faecalis (strain ATCC 700802 / V583).